A 143-amino-acid chain; its full sequence is MAGFLMKQMVGNQLSEVTGGLGMKDDGGEKTETGEDPEVIAARLEQEERRKEKHRKMENEREKMRQGIRDKYAIKKKEEGVAMDFTEGRIGGPRKTPEEIAAEMNAEDDSLIGQLGLTEQVEKAKTMATGAFETVKGFFPFGK.

Positions 16–72 (EVTGGLGMKDDGGEKTETGEDPEVIAARLEQEERRKEKHRKMENEREKMRQGIRDKY) are disordered. 2 stretches are compositionally biased toward basic and acidic residues: residues 23 to 33 (MKDDGGEKTET) and 44 to 72 (LEQE…RDKY). Positions 40 to 71 (IAARLEQEERRKEKHRKMENEREKMRQGIRDK) form a coiled coil.

Belongs to the complexin/synaphin family.

The protein localises to the cytoplasm. The protein resides in the cytosol. Positively regulates a late step in synaptic vesicle exocytosis. The sequence is that of Putative complexin-1 (cpx-1) from Caenorhabditis elegans.